The following is a 266-amino-acid chain: Chorismate mutase (266 aa).

The Chorismate mutase domain occupies 7–263; the sequence is MADSERALNL…EVEYLMQRLI (257 aa). L-tyrosine is bound by residues Arg77, Arg78, Asn144, Gly146, Ser147, and Thr150. The L-tryptophan site is built by Asn144, Gly146, and Ser147.

In terms of assembly, homodimer.

The protein resides in the cytoplasm. The enzyme catalyses chorismate = prephenate. Its pathway is metabolic intermediate biosynthesis; prephenate biosynthesis; prephenate from chorismate: step 1/1. Each dimer has two allosteric binding sites that can bind the regulatory effectors tryptophan or tyrosine. Can bind either one tryptophan or one tyrosine, two tryptophan or two tyrosine or one tryptophan and one tyrosine, which differentially affect the catalytic activity. Activated by tryptophan and subject to feedback inhibition by tyrosine. In the presence of both tryptophan and tyrosine, the enzyme is in the activated state. Its function is as follows. Catalyzes the Claisen rearrangement of chorismate to prephenate. Acts at the first branch point in the aromatic amino acid pathway where it steers biosynthesis towards phenylalanine and tyrosine, and away from tryptophan. The protein is Chorismate mutase of Trichoderma parareesei (Filamentous fungus).